The following is a 201-amino-acid chain: 3-isopropylmalate dehydratase small subunit (201 aa).

Belongs to the LeuD family. LeuD type 1 subfamily. In terms of assembly, heterodimer of LeuC and LeuD.

The enzyme catalyses (2R,3S)-3-isopropylmalate = (2S)-2-isopropylmalate. The protein operates within amino-acid biosynthesis; L-leucine biosynthesis; L-leucine from 3-methyl-2-oxobutanoate: step 2/4. Its function is as follows. Catalyzes the isomerization between 2-isopropylmalate and 3-isopropylmalate, via the formation of 2-isopropylmaleate. In Shewanella denitrificans (strain OS217 / ATCC BAA-1090 / DSM 15013), this protein is 3-isopropylmalate dehydratase small subunit.